Consider the following 298-residue polypeptide: MKSDLETPLNLEELAFSHISVLGREVIEGLAVRPGGHYLDVTVGGGGHSRLILEAAADVRVTAVDQDEDALVAANKNLAEYSDRIQFIYSNFADYEFPPNTFDGILADLGVSSYHLDQAERGFSFRQAANLDMRMDRGRSLTAADVINNWDEAELADIFFKYGEERLSRRIARRIVERRPLHTTTELADAIASSVPPKYRYGRIHPATRVFQALRIVVNDELKSLETFLDKAPNALVPGGRIAIISFHSLEDRPVKHGLRNSPLLKVLTKKPIIAQEEEISNNPRSRSAKLRIAEKLV.

S-adenosyl-L-methionine-binding positions include 46–48, D65, F92, D108, and H115; that span reads GGH.

This sequence belongs to the methyltransferase superfamily. RsmH family.

The protein resides in the cytoplasm. The catalysed reaction is cytidine(1402) in 16S rRNA + S-adenosyl-L-methionine = N(4)-methylcytidine(1402) in 16S rRNA + S-adenosyl-L-homocysteine + H(+). Its function is as follows. Specifically methylates the N4 position of cytidine in position 1402 (C1402) of 16S rRNA. The polypeptide is Ribosomal RNA small subunit methyltransferase H (Nostoc punctiforme (strain ATCC 29133 / PCC 73102)).